Consider the following 279-residue polypeptide: DegV domain-containing protein M6_Spy1246 (279 aa).

Residues 4–278 (IKIVTDSSIT…EGAFAVMVRY (275 aa)) form the DegV domain. Residues threonine 62 and serine 95 each coordinate hexadecanoate.

Functionally, may bind long-chain fatty acids, such as palmitate, and may play a role in lipid transport or fatty acid metabolism. This is DegV domain-containing protein M6_Spy1246 from Streptococcus pyogenes serotype M6 (strain ATCC BAA-946 / MGAS10394).